The chain runs to 259 residues: uncharacterized protein (259 aa).

A signal peptide spans 1–28; sequence MNIKRRLKYLTSCLLVSAFFWINSSAWA. Transmembrane regions (helical) follow at residues 32–52 and 191–211; these read EIPP…IYVA and WGFL…GIFT.

The protein localises to the cell membrane. This is an uncharacterized protein from Coxiella burnetii (strain RSA 493 / Nine Mile phase I).